Reading from the N-terminus, the 289-residue chain is Fumagillin beta-trans-bergamotene synthase af520 (289 aa).

A run of 6 helical transmembrane segments spans residues 35-55, 95-115, 142-162, 165-185, 222-242, and 262-282; these read AVAL…GFLW, TLLY…TNTI, LIGA…FDGG, LHGL…TTGH, AWTI…LAYV, and YVSY…PIFP.

This sequence belongs to the paxB family.

It localises to the membrane. The enzyme catalyses (2E,6E)-farnesyl diphosphate = (+)-exo-beta-bergamotene + diphosphate. It participates in secondary metabolite biosynthesis; terpenoid biosynthesis. Beta-trans-bergamotene synthase; part of the gene cluster that mediates the biosynthesis of fumagillin, a meroterpenoid that has numerous biological activities including irreversible inhibition of human type 2 methionine aminopeptidase (METAP2). Within the pathway, the membrane-bound fumagillin beta-trans-bergamotene synthase af520 converts farnesyl pyrophosphate (FPP) to beta-trans-bergamotene. The pathway begins with the conversion of FPP to beta-trans-bergamotene by af520. The multifunctional cytochrome P450 monooxygenase af510 then converts beta-trans-bergamotene into 5-keto-demethoxyfumagillol via several oxydation steps. 5-keto-demethoxyfumagillol is then subjected to successive C-6 hydroxylation and O-methylation by the dioxygenase af480 and O-methyltransferase af390-400, respectively, to yield 5-keto-fumagillol, which is then stereoselectively reduced by the keto-reductase af490 to 5R-hydroxy-seco-sesquiterpene. The next step is the polyketide transferase af380-catalyzed transfer of a dodecapentaenoyl group synthesized by the polyketide synthase af370 onto 5R-hydroxy-seco-sesquiterpene which leads to the production of prefumagillin. Finally, oxidative cleavage by the monooxygenase af470 converts prefumagillin to fumagillin. This Aspergillus fumigatus (strain ATCC MYA-4609 / CBS 101355 / FGSC A1100 / Af293) (Neosartorya fumigata) protein is Fumagillin beta-trans-bergamotene synthase af520.